Here is a 214-residue protein sequence, read N- to C-terminus: Protein-L-isoaspartate O-methyltransferase (214 aa).

Ser63 is an active-site residue.

The protein belongs to the methyltransferase superfamily. L-isoaspartyl/D-aspartyl protein methyltransferase family.

Its subcellular location is the cytoplasm. It catalyses the reaction [protein]-L-isoaspartate + S-adenosyl-L-methionine = [protein]-L-isoaspartate alpha-methyl ester + S-adenosyl-L-homocysteine. Its function is as follows. Catalyzes the methyl esterification of L-isoaspartyl residues in peptides and proteins that result from spontaneous decomposition of normal L-aspartyl and L-asparaginyl residues. It plays a role in the repair and/or degradation of damaged proteins. The chain is Protein-L-isoaspartate O-methyltransferase from Maridesulfovibrio salexigens (strain ATCC 14822 / DSM 2638 / NCIMB 8403 / VKM B-1763) (Desulfovibrio salexigens).